Consider the following 210-residue polypeptide: Putative protein-lysine deacylase ABHD14B (210 aa).

A Phosphoserine modification is found at Ser-91. Catalysis depends on charge relay system residues Ser-111, Asp-162, and His-188.

The protein belongs to the AB hydrolase superfamily. ABHD14 family. In terms of assembly, may interact with TAF1.

Its subcellular location is the cytoplasm. The protein localises to the nucleus. It catalyses the reaction L-lysyl-[protein] + acetyl-CoA = N(6)-acetyl-L-lysyl-[protein] + CoA + H(+). Functionally, acts as an atypical protein-lysine deacetylase in vitro. Catalyzes the deacetylation of lysine residues using CoA as substrate, generating acetyl-CoA and the free amine of protein-lysine residues. Additional experiments are however required to confirm the protein-lysine deacetylase activity in vivo. Has hydrolase activity towards various surrogate p-nitrophenyl (pNp) substrates, such as pNp-butyrate, pNp-acetate and pNp-octanoate in vitro, with a strong preference for pNp-acetate. May activate transcription. In Rattus norvegicus (Rat), this protein is Putative protein-lysine deacylase ABHD14B.